Consider the following 701-residue polypeptide: MAQKDVLTDLTKVRNIGIMAHIDAGKTTTTERILYYTGISYKIGEVHDGAATMDWMEQEQERGITITSAATTCFWNDNQINIIDTPGHVDFTVEVERSLRVLDGAVAVFDGKEGVEPQSEQVWRQADKYDVPRICFVNKMDKIGADFYFSVRTMEERLGANVIPIQLPVGSEGDFEGVVDLVEMKAKVWSADAKLGEKYDVVDIPADLQEKADEYRTKLLEAVAETDEALLEKYLGGEELTEAEIKGAIRKLTITSEAYPVLCGSAFKNKGVQPMLDAVIDYLPSPLDVPAAIGHVPGKEDEEVVRKPSTDEPFSALAFKVATHPFFGKLTYVRVYSGKVDSGSQVINSTKGKKERLGKLFQMHSNKENPVETASAGHIYAVIGLKDTTTGDTLSDPNNQIVLESMTFPDPVIEVAIEPKTKSDQEKLSLSIQKLAEEDPTFKVHLDQETGQTVIGGMGELHLDILVDRMRREFKVEANVGKPQVAYKETIKRLVEKVEFTHKKQTGGSGQFAKVLISIEPFTGEDGATYEFESKVTGGRIPREYIPSVDAGAQDAMQYGVLAGYPLVNLKVTLLDGAFHEVDSSEMAFKIAGSQVLKKAAAAAHPVILEPIMAVEVTTPEDYMGDVIGDLNSRRGQIQAMEERSGARVVKAHVPLSEMFGYVGDLRSKTQGRANYSMVFDSYAEVPANVSKEIIAKATGE.

One can recognise a tr-type G domain in the interval 11–287; that stretch reads TKVRNIGIMA…AVIDYLPSPL (277 aa). GTP is bound by residues 20 to 27, 84 to 88, and 138 to 141; these read AHIDAGKT, DTPGH, and NKMD.

The protein belongs to the TRAFAC class translation factor GTPase superfamily. Classic translation factor GTPase family. EF-G/EF-2 subfamily.

It localises to the cytoplasm. Functionally, catalyzes the GTP-dependent ribosomal translocation step during translation elongation. During this step, the ribosome changes from the pre-translocational (PRE) to the post-translocational (POST) state as the newly formed A-site-bound peptidyl-tRNA and P-site-bound deacylated tRNA move to the P and E sites, respectively. Catalyzes the coordinated movement of the two tRNA molecules, the mRNA and conformational changes in the ribosome. The protein is Elongation factor G of Mycobacterium marinum (strain ATCC BAA-535 / M).